We begin with the raw amino-acid sequence, 260 residues long: Ribonuclease HII (260 aa).

An RNase H type-2 domain is found at Gln-70 to Asn-260. The a divalent metal cation site is built by Asp-76, Glu-77, and Asp-171.

The protein belongs to the RNase HII family. Mn(2+) serves as cofactor. Mg(2+) is required as a cofactor.

Its subcellular location is the cytoplasm. The enzyme catalyses Endonucleolytic cleavage to 5'-phosphomonoester.. Functionally, endonuclease that specifically degrades the RNA of RNA-DNA hybrids. The sequence is that of Ribonuclease HII from Streptococcus mutans serotype c (strain ATCC 700610 / UA159).